A 95-amino-acid polypeptide reads, in one-letter code: FMRFamide-like neuropeptides 16 (95 aa).

Residues 1–24 (MSLSGFEFSSIIAVLLLLIQLSSA) form the signal peptide. A propeptide spanning residues 25–58 (AVLPVDYASQYGVASADEMTALPEEGSLFAERPA) is cleaved from the precursor. Phenylalanine amide is present on residues Phe67, Phe77, and Phe87. Residues 90 to 95 (SAPFEQ) constitute a propeptide that is removed on maturation.

It belongs to the FARP (FMRFamide related peptide) family.

It is found in the secreted. Functionally, FMRFamides and FMRFamide-like peptides are neuropeptides. AQTFVRF-amide inhibits the activity of dissected pharyngeal myogenic muscle system. The sequence is that of FMRFamide-like neuropeptides 16 (flp-16) from Caenorhabditis briggsae.